A 1039-amino-acid chain; its full sequence is Error-prone DNA polymerase (1039 aa).

The protein belongs to the DNA polymerase type-C family. DnaE2 subfamily.

It is found in the cytoplasm. The enzyme catalyses DNA(n) + a 2'-deoxyribonucleoside 5'-triphosphate = DNA(n+1) + diphosphate. Its function is as follows. DNA polymerase involved in damage-induced mutagenesis and translesion synthesis (TLS). It is not the major replicative DNA polymerase. This chain is Error-prone DNA polymerase, found in Corynebacterium diphtheriae (strain ATCC 700971 / NCTC 13129 / Biotype gravis).